We begin with the raw amino-acid sequence, 742 residues long: Probable serine/threonine-protein kinase PkwA (742 aa).

In terms of domain architecture, Protein kinase spans 16–266 (YRLVSRLGAG…TAELLAQLST (251 aa)). ATP-binding positions include 22-30 (LGAGGMGQV) and K44. D138 acts as the Proton acceptor in catalysis. The interval 266 to 394 (TDHTGDDWPP…PWSPPRVQPP (129 aa)) is disordered. The segment covering 301–318 (EPPPPSHGPPRPSEPLPD) has biased composition (pro residues). Basic and acidic residues predominate over residues 343 to 356 (LEEKPIQVIHEPER). The segment covering 377 to 392 (PRPAAPQPPWSPPRVQ) has biased composition (pro residues). WD repeat units follow at residues 455–496 (ILTT…ELHT), 497–538 (LEGH…ERAV), 539–580 (FEGH…EHAV), 581–621 (LKGH…KERD), 622–663 (VLQA…ALHT), 664–705 (FEGH…EHTT), and 706–742 (LEGH…IATE).

Belongs to the protein kinase superfamily. Ser/Thr protein kinase family.

The catalysed reaction is L-seryl-[protein] + ATP = O-phospho-L-seryl-[protein] + ADP + H(+). The enzyme catalyses L-threonyl-[protein] + ATP = O-phospho-L-threonyl-[protein] + ADP + H(+). Functionally, may play a regulatory role during the complex growth cycle and in secondary metabolite production. The protein is Probable serine/threonine-protein kinase PkwA (pkwA) of Thermomonospora curvata.